The sequence spans 250 residues: MPITANTLYRDSFNFFRNQLTSILMLALLTAFISVLLNQAFSPDVEQLKILSATEGDFAASAGMGIQEIIQQMTPEQQMVLLKVSAAATFSALVGNVLLVGGMLTLIRLVSQGQRISALRAIGASAPELPRLLLLLFICTLLIQLGLTLFVVPGVIMAIAFSLAPVITATDKKGVFASIKLSCKLAFANARVIVPAMMLWLAAKLLVLFMVSHLSVLTPNVASVVLTALSNLVSALLLIYLFRLYMLLRS.

The next 6 membrane-spanning stretches (helical) occupy residues 23–43 (ILML…AFSP), 87–107 (AATF…LTLI), 132–152 (LLLL…LFVV), 156–176 (IMAI…KGVF), 192–212 (VIVP…FMVS), and 222–242 (ASVV…IYLF).

This sequence belongs to the UPF0259 family.

The protein resides in the cell inner membrane. This is UPF0259 membrane protein Spro_2675 from Serratia proteamaculans (strain 568).